The chain runs to 600 residues: Putative acetyltransferase MPN_114 (600 aa).

The Proton acceptor role is filled by H323. 396-409 (TKPLIKAKGIKNSE) lines the CoA pocket.

The protein belongs to the carnitine/choline acetyltransferase family.

The sequence is that of Putative acetyltransferase MPN_114 from Mycoplasma pneumoniae (strain ATCC 29342 / M129 / Subtype 1) (Mycoplasmoides pneumoniae).